A 195-amino-acid polypeptide reads, in one-letter code: Peptidyl-tRNA hydrolase (195 aa).

Y17 serves as a coordination point for tRNA. Catalysis depends on H22, which acts as the Proton acceptor. Residues F68, N70, and N116 each contribute to the tRNA site.

The protein belongs to the PTH family. As to quaternary structure, monomer.

The protein localises to the cytoplasm. The catalysed reaction is an N-acyl-L-alpha-aminoacyl-tRNA + H2O = an N-acyl-L-amino acid + a tRNA + H(+). Hydrolyzes ribosome-free peptidyl-tRNAs (with 1 or more amino acids incorporated), which drop off the ribosome during protein synthesis, or as a result of ribosome stalling. Its function is as follows. Catalyzes the release of premature peptidyl moieties from peptidyl-tRNA molecules trapped in stalled 50S ribosomal subunits, and thus maintains levels of free tRNAs and 50S ribosomes. The chain is Peptidyl-tRNA hydrolase from Shewanella loihica (strain ATCC BAA-1088 / PV-4).